Here is a 504-residue protein sequence, read N- to C-terminus: Aspartyl/glutamyl-tRNA(Asn/Gln) amidotransferase subunit B (504 aa).

Belongs to the GatB/GatE family. GatB subfamily. Heterotrimer of A, B and C subunits.

It catalyses the reaction L-glutamyl-tRNA(Gln) + L-glutamine + ATP + H2O = L-glutaminyl-tRNA(Gln) + L-glutamate + ADP + phosphate + H(+). The enzyme catalyses L-aspartyl-tRNA(Asn) + L-glutamine + ATP + H2O = L-asparaginyl-tRNA(Asn) + L-glutamate + ADP + phosphate + 2 H(+). In terms of biological role, allows the formation of correctly charged Asn-tRNA(Asn) or Gln-tRNA(Gln) through the transamidation of misacylated Asp-tRNA(Asn) or Glu-tRNA(Gln) in organisms which lack either or both of asparaginyl-tRNA or glutaminyl-tRNA synthetases. The reaction takes place in the presence of glutamine and ATP through an activated phospho-Asp-tRNA(Asn) or phospho-Glu-tRNA(Gln). The protein is Aspartyl/glutamyl-tRNA(Asn/Gln) amidotransferase subunit B of Tropheryma whipplei (strain TW08/27) (Whipple's bacillus).